Here is a 621-residue protein sequence, read N- to C-terminus: Putative acyltransferase plsB1 (621 aa).

An HXXXXD motif motif is present at residues 123–128; the sequence is HRSYLD.

It belongs to the GPAT/DAPAT family.

Its subcellular location is the cell membrane. This is Putative acyltransferase plsB1 (plsB1) from Mycobacterium bovis (strain ATCC BAA-935 / AF2122/97).